The primary structure comprises 182 residues: uncharacterized protein (182 aa).

Residues 1–177 (MEFSVGGVEV…KFLEVFKKHL (177 aa)) enclose the Macro domain.

This is an uncharacterized protein from Pyrobaculum aerophilum (strain ATCC 51768 / DSM 7523 / JCM 9630 / CIP 104966 / NBRC 100827 / IM2).